We begin with the raw amino-acid sequence, 99 residues long: MPKKRLIGEVLSDKMDKTVVVAVSTLVKHPRVGKYIKRTKKYYAHDENNECRVGDIVEIVESRPLSKLKRWKVERIVERSVFAEKAPEEDLEGGSNNDN.

The protein belongs to the universal ribosomal protein uS17 family. Part of the 30S ribosomal subunit.

One of the primary rRNA binding proteins, it binds specifically to the 5'-end of 16S ribosomal RNA. This is Small ribosomal subunit protein uS17 from Thermosipho melanesiensis (strain DSM 12029 / CIP 104789 / BI429).